A 125-amino-acid polypeptide reads, in one-letter code: Large-conductance mechanosensitive channel (125 aa).

Transmembrane regions (helical) follow at residues 19 to 39, 42 to 62, and 67 to 87; these read VGVI…SNLI, LIGI…IGSA, and GSFL…FLMV.

Belongs to the MscL family. As to quaternary structure, homopentamer.

The protein localises to the cell membrane. Functionally, channel that opens in response to stretch forces in the membrane lipid bilayer. May participate in the regulation of osmotic pressure changes within the cell. The chain is Large-conductance mechanosensitive channel from Limosilactobacillus fermentum (strain NBRC 3956 / LMG 18251) (Lactobacillus fermentum).